We begin with the raw amino-acid sequence, 48 residues long: Phospholipase A2 superbin d (48 aa).

Residues tyrosine 28, glycine 30, and glycine 32 each contribute to the Ca(2+) site. Cysteine 29 and cysteine 45 are disulfide-bonded. Residue histidine 48 is part of the active site.

Ca(2+) is required as a cofactor. Expressed by the venom gland.

It is found in the secreted. It carries out the reaction a 1,2-diacyl-sn-glycero-3-phosphocholine + H2O = a 1-acyl-sn-glycero-3-phosphocholine + a fatty acid + H(+). Snake venom phospholipase A2 (PLA2) that inhibits collagen-induced platelet aggregation. In terms of inhibition of platelet aggregation, superbin d is less potent as superbin a, b, and c. PLA2 catalyzes the calcium-dependent hydrolysis of the 2-acyl groups in 3-sn-phosphoglycerides. The sequence is that of Phospholipase A2 superbin d from Austrelaps superbus (Lowland copperhead snake).